A 231-amino-acid chain; its full sequence is Orotidine 5'-phosphate decarboxylase (231 aa).

Substrate-binding positions include Asp-12, Lys-34, 61–70, Thr-116, Arg-177, Gln-186, Gly-206, and Arg-207; that span reads DMKLLDIDNT. The Proton donor role is filled by Lys-63.

This sequence belongs to the OMP decarboxylase family. Type 1 subfamily. Homodimer.

It catalyses the reaction orotidine 5'-phosphate + H(+) = UMP + CO2. It functions in the pathway pyrimidine metabolism; UMP biosynthesis via de novo pathway; UMP from orotate: step 2/2. Catalyzes the decarboxylation of orotidine 5'-monophosphate (OMP) to uridine 5'-monophosphate (UMP). In Allorhizobium ampelinum (strain ATCC BAA-846 / DSM 112012 / S4) (Agrobacterium vitis (strain S4)), this protein is Orotidine 5'-phosphate decarboxylase.